The chain runs to 536 residues: DEAD-box ATP-dependent RNA helicase 41 (536 aa).

Basic and acidic residues predominate over residues 1–10 (MEQEENHSAD). A disordered region spans residues 1-25 (MEQEENHSADHLSAQPGNGNELEES). An HIT-type zinc finger spans residues 40–69 (GEPRCVICGRYGEYICDQTDDDICSVECKT). The Q motif signature appears at 137–165 (MCFSSSGLPEKLVLNLEAAGYVMPTPVQM). A Helicase ATP-binding domain is found at 168–344 (IPSSICNRSL…NSLAKNAIHI (177 aa)). 181 to 188 (ADTGSGKT) is an ATP binding site. A DEAD box motif is present at residues 293 to 296 (DEVD). Positions 355 to 518 (SVKQVVIWVE…PIPRELANSK (164 aa)) constitute a Helicase C-terminal domain.

It belongs to the DEAD box helicase family. DDX59 subfamily.

It catalyses the reaction ATP + H2O = ADP + phosphate + H(+). The polypeptide is DEAD-box ATP-dependent RNA helicase 41 (Oryza sativa subsp. japonica (Rice)).